Reading from the N-terminus, the 339-residue chain is UDP-galactose transporter homolog 1 (339 aa).

Residues methionine 1–serine 4 lie on the Lumenal side of the membrane. A helical transmembrane segment spans residues threonine 5 to valine 25. Residues glutamine 26 to glutamine 42 lie on the Cytoplasmic side of the membrane. A helical membrane pass occupies residues phenylalanine 43 to leucine 63. Residues asparagine 64 to tyrosine 106 lie on the Lumenal side of the membrane. Residues leucine 107–leucine 127 form a helical membrane-spanning segment. Over tyrosine 128–lysine 136 the chain is Cytoplasmic. Residues lysine 137–glycine 157 traverse the membrane as a helical segment. At lysine 158 to glutamine 174 the chain is on the lumenal side. Residue asparagine 165 is glycosylated (N-linked (GlcNAc...) asparagine). A helical transmembrane segment spans residues glycine 175–threonine 192. Residues glutamine 193–alanine 214 are Cytoplasmic-facing. The chain crosses the membrane as a helical span at residues histidine 215–isoleucine 235. At aspartate 236–serine 245 the chain is on the lumenal side. Residues valine 246–methionine 266 form a helical membrane-spanning segment. Over glycine 267 to serine 280 the chain is Cytoplasmic. The helical transmembrane segment at leucine 281 to glycine 303 threads the bilayer. The Lumenal segment spans residues lysine 304–arginine 307. A helical transmembrane segment spans residues phenylalanine 308 to asparagine 327. At lysine 328–alanine 339 the chain is on the cytoplasmic side.

The protein belongs to the nucleotide-sugar transporter family. SLC35B subfamily.

The protein localises to the endoplasmic reticulum membrane. May be involved in specific transport of UDP-Gal from the cytosol to the Golgi lumen. Involved in the maintenance of optimal conditions for the folding of secretory pathway proteins in the endoplasmic reticulum. Overexpression confers resistance to the immunosuppressive drug, leflunomide. The sequence is that of UDP-galactose transporter homolog 1 (HUT1) from Saccharomyces cerevisiae (strain ATCC 204508 / S288c) (Baker's yeast).